A 316-amino-acid polypeptide reads, in one-letter code: Palmitoyltransferase ZDHHC3-A (316 aa).

The Cytoplasmic portion of the chain corresponds to 1 to 45 (MRSPVPRFRDVERQASGLQPPQCLPSCHERQSSMWFIKDACGIVC). The helical transmembrane segment at 46–66 (AIITWFLVFFAEFVVLFVMLI) threads the bilayer. Topologically, residues 67-70 (PSKN) are lumenal. Residues 71–91 (LTYSLVNGTLFNSLAFLALAS) traverse the membrane as a helical segment. At 92–169 (HFRAMCTDPG…NCVGENNQKY (78 aa)) the chain is on the cytoplasmic side. A DHHC domain is found at 124–175 (VYKCPKCCSIKPDRAHHCSVCKRCIRKMDHHCPWVNNCVGENNQKYFVLFTM). Cysteine 144 carries the S-palmitoyl cysteine lipid modification. Catalysis depends on cysteine 155, which acts as the S-palmitoyl cysteine intermediate. The helical transmembrane segment at 170–190 (FVLFTMYICLISLHSLVMVVF) threads the bilayer. Over 191–212 (HFLNCFEDDWTKCSTFSPPATV) the chain is Lumenal. A helical transmembrane segment spans residues 213–233 (ILLILLCFEGLLFLIFTSVMF). The Cytoplasmic portion of the chain corresponds to 234-316 (GTQVHSICTD…DVIEIPLEPH (83 aa)).

This sequence belongs to the DHHC palmitoyltransferase family. Monomer. Homooligomers. The monomeric form has a higher catalytic activity. Forms heterooligomers with zdhhc7. Autopalmitoylated.

It localises to the golgi apparatus membrane. The enzyme catalyses L-cysteinyl-[protein] + hexadecanoyl-CoA = S-hexadecanoyl-L-cysteinyl-[protein] + CoA. The catalysed reaction is L-cysteinyl-[protein] + tetradecanoyl-CoA = S-tetradecanoyl-L-cysteinyl-[protein] + CoA. It catalyses the reaction L-cysteinyl-[protein] + octadecanoyl-CoA = S-octadecanoyl-L-cysteinyl-[protein] + CoA. Golgi-localized palmitoyltransferase that catalyzes the addition of palmitate onto various protein substrates and regulates their association with membranes. Has no stringent fatty acid selectivity and in addition to palmitate can also transfer onto target proteins myristate from tetradecanoyl-CoA and stearate from octadecanoyl-CoA. The protein is Palmitoyltransferase ZDHHC3-A (zdhhc3a) of Danio rerio (Zebrafish).